The sequence spans 488 residues: Eukaryotic translation initiation factor 3 subunit L (488 aa).

Disordered regions lie at residues 1-34 and 427-449; these read MSLP…YREQ and SEGG…HGKE. Residues 7–16 are compositionally biased toward basic and acidic residues; that stretch reads QNRDAARRAP. A compositionally biased stretch (acidic residues) spans 17–27; sequence DDDDDAEEETM. The PCI domain occupies 256–450; sequence DAIRMFSHIL…RSRLRHGKEI (195 aa). The span at 431 to 440 shows a compositional bias: basic and acidic residues; the sequence is LLERRGDPQQ.

The protein belongs to the eIF-3 subunit L family. In terms of assembly, component of the eukaryotic translation initiation factor 3 (eIF-3) complex.

It is found in the cytoplasm. Component of the eukaryotic translation initiation factor 3 (eIF-3) complex, which is involved in protein synthesis of a specialized repertoire of mRNAs and, together with other initiation factors, stimulates binding of mRNA and methionyl-tRNAi to the 40S ribosome. The eIF-3 complex specifically targets and initiates translation of a subset of mRNAs involved in cell proliferation. The protein is Eukaryotic translation initiation factor 3 subunit L of Phaeosphaeria nodorum (strain SN15 / ATCC MYA-4574 / FGSC 10173) (Glume blotch fungus).